An 852-amino-acid chain; its full sequence is Leucine--tRNA ligase (852 aa).

The short motif at 41–51 (PYPSGRIHIGH) is the 'HIGH' region element. The 'KMSKS' region signature appears at 623–627 (KMSKS). Lys-626 contributes to the ATP binding site.

The protein belongs to the class-I aminoacyl-tRNA synthetase family.

It is found in the cytoplasm. It catalyses the reaction tRNA(Leu) + L-leucine + ATP = L-leucyl-tRNA(Leu) + AMP + diphosphate. The protein is Leucine--tRNA ligase of Ruegeria pomeroyi (strain ATCC 700808 / DSM 15171 / DSS-3) (Silicibacter pomeroyi).